The chain runs to 217 residues: C-type lectin domain family 2 member I (217 aa).

Residues 1–53 lie on the Cytoplasmic side of the membrane; that stretch reads MPDCLETGEKLFVHNMNAQCVQKPEEGNGPLGTGGKIVQGKCFRIISTVSPVK. A helical; Signal-anchor for type II membrane protein transmembrane segment spans residues 54 to 74; it reads LYCCYGVIMVLTVAVIALSVA. The Extracellular portion of the chain corresponds to 75 to 217; the sequence is LSTKKTEQII…YNLHCQTPPV (143 aa). Residues cysteine 92 and cysteine 103 are joined by a disulfide bond. Residues 99–203 form the C-type lectin domain; sequence VGNKCFYFSG…SYINRMWICS (105 aa). N-linked (GlcNAc...) asparagine glycosylation occurs at asparagine 112. A disulfide bridge connects residues cysteine 120 and cysteine 202.

Detected in osteoblasts, growth plate chondrocytes and skeletal muscle overlying the bone (at protein level). Detected in spleen, B-cells, dendritic cells, thymus, and in IL2-activated natural killer cells.

The protein localises to the cell membrane. Inhibits osteoclast formation. Receptor for KLRB1F. Enhances T-cell activation. Plays a role in splenocyte activation, T-cell responses and IL-2 production. This chain is C-type lectin domain family 2 member I (Clec2i), found in Mus musculus (Mouse).